The chain runs to 25 residues: Phospholipase A1 verutoxin-2a (25 aa).

The protein belongs to the AB hydrolase superfamily. Lipase family. In terms of processing, contains six disulfide bonds. In terms of tissue distribution, expressed by the venom gland.

It is found in the secreted. The catalysed reaction is a 1,2-diacyl-sn-glycero-3-phosphocholine + H2O = a 2-acyl-sn-glycero-3-phosphocholine + a fatty acid + H(+). It carries out the reaction 1-(9Z-octadecenoyl)-2-hexadecanoyl-sn-glycero-3-phosphocholine + H2O = 2-hexadecanoyl-sn-glycero-3-phosphocholine + (9Z)-octadecenoate + H(+). The enzyme catalyses a 1-acyl-sn-glycero-3-phosphocholine + H2O = sn-glycerol 3-phosphocholine + a fatty acid + H(+). Its pathway is phospholipid metabolism. With respect to regulation, activity is maximal in the presence of calcium. However, unlike phospholipases A2 whose catalytic activity is strictly calcium-dependent, this enzyme shows considerable catalytic activity on phosphatidylcholine emulsified in calcium free solution; the catalytic activity of VT-2a assayed in the absence of calcium ions is 18-20% of that assayed in solution containing calcium ions. In terms of biological role, catalyzes the hydrolysis of glycerophospholipids such as phosphatidylcholine (1,2-diacyl-sn-glycero-3-phosphocholine) and has a moderate activity to hydrolyze lysoglycerophospholipids such as lysophosphatidylcholine (1-acyl-sn-glycero-3-phosphocholine), but is unable to hydrolyze sphingomyelin. In addition to acting as an allergen, it possesses a potent hemolytic activity on red blood cells of mice (98.8% of hemolysis at 3.0 ug/ml). The protein is Phospholipase A1 verutoxin-2a of Vespa velutina (Asian yellow-legged hornet).